We begin with the raw amino-acid sequence, 890 residues long: UPF0182 protein SYNW1212 (890 aa).

The next 8 helical transmembrane spans lie at 21-41, 64-84, 98-118, 134-154, 173-193, 219-239, 268-288, and 295-315; these read WLLQ…AIRW, LTLL…NGLI, WQVS…LVAV, AVVL…SIPL, FAAL…CLGN, RLLM…CWLS, LLTV…SLLL, and VLAV…WLIL.

The protein belongs to the UPF0182 family.

The protein resides in the cell membrane. The protein is UPF0182 protein SYNW1212 of Parasynechococcus marenigrum (strain WH8102).